The chain runs to 164 residues: Kunitz-type proteinase inhibitor BbCI (164 aa).

It belongs to the protease inhibitor I3 (leguminous Kunitz-type inhibitor) family.

The protein resides in the secreted. In terms of biological role, inhibits T.cruzi cruzipain. The polypeptide is Kunitz-type proteinase inhibitor BbCI (Bauhinia bauhinioides (Perlebia bauhinoides)).